A 77-amino-acid chain; its full sequence is U8-lycotoxin-Ls1m (77 aa).

The N-terminal stretch at 1–20 is a signal peptide; the sequence is MKLMIFTGLVLFAIVRLIEA. A propeptide spanning residues 21–26 is cleaved from the precursor; the sequence is QAENEK.

This sequence belongs to the neurotoxin 19 (CSTX) family. 08 (U8-Lctx) subfamily. In terms of processing, contains 4 disulfide bonds. Expressed by the venom gland.

The protein localises to the secreted. This Lycosa singoriensis (Wolf spider) protein is U8-lycotoxin-Ls1m.